Here is a 335-residue protein sequence, read N- to C-terminus: Syntaxin-18 (335 aa).

The Cytoplasmic portion of the chain corresponds to 1-309 (MAVDITLLFR…EDIREAIKNN (309 aa)). Composition is skewed to basic and acidic residues over residues 168 to 182 (KLEPEPNTKTRESTS) and 192 to 208 (KDSEENPATEERPEKIL). Positions 168–226 (KLEPEPNTKTRESTSSEKVSQSPSKDSEENPATEERPEKILAETQPELGTWGDGKGEDE) are disordered. The t-SNARE coiled-coil homology domain occupies 243 to 305 (IGEMNSLFDE…KEGNEDIREA (63 aa)). Residues 310-330 (AGFRVWILFFLVMCSFSLLFL) form a helical; Anchor for type IV membrane protein membrane-spanning segment. The Vesicular portion of the chain corresponds to 331–335 (DWYDS).

The protein belongs to the syntaxin family. Component of a SNARE complex consisting of STX18, USE1L, BNIP1/SEC20L, and SEC22B. RINT1/TIP20L and ZW10 are associated with the complex through interaction with BNIP1/SEC20L. Interacts directly with USE1L and BNIP1/SEC20L. In terms of tissue distribution, ubiquitous.

The protein resides in the endoplasmic reticulum membrane. It is found in the golgi apparatus membrane. Its function is as follows. Syntaxin that may be involved in targeting and fusion of Golgi-derived retrograde transport vesicles with the ER. In Homo sapiens (Human), this protein is Syntaxin-18 (STX18).